A 536-amino-acid polypeptide reads, in one-letter code: CTP synthase (536 aa).

The amidoligase domain stretch occupies residues 1–266; it reads MKTKFIFVTG…DEQVVEKLNI (266 aa). A CTP-binding site is contributed by serine 14. Serine 14 serves as a coordination point for UTP. Residues 15–20 and aspartate 72 each bind ATP; that span reads SIGKGL. Mg(2+) contacts are provided by aspartate 72 and glutamate 140. CTP-binding positions include 147-149, 187-192, and lysine 223; these read DIE and KTKPTQ. Residues 187-192 and lysine 223 contribute to the UTP site; that span reads KTKPTQ. Residues 292-534 form the Glutamine amidotransferase type-1 domain; the sequence is RIAIVGKYVN…IAAALDRKDK (243 aa). An L-glutamine-binding site is contributed by glycine 354. Cysteine 381 acts as the Nucleophile; for glutamine hydrolysis in catalysis. Residues 382 to 385, glutamate 405, and arginine 462 contribute to the L-glutamine site; that span reads LGMQ. Residues histidine 507 and glutamate 509 contribute to the active site.

It belongs to the CTP synthase family. In terms of assembly, homotetramer.

The catalysed reaction is UTP + L-glutamine + ATP + H2O = CTP + L-glutamate + ADP + phosphate + 2 H(+). The enzyme catalyses L-glutamine + H2O = L-glutamate + NH4(+). It catalyses the reaction UTP + NH4(+) + ATP = CTP + ADP + phosphate + 2 H(+). It functions in the pathway pyrimidine metabolism; CTP biosynthesis via de novo pathway; CTP from UDP: step 2/2. With respect to regulation, allosterically activated by GTP, when glutamine is the substrate; GTP has no effect on the reaction when ammonia is the substrate. The allosteric effector GTP functions by stabilizing the protein conformation that binds the tetrahedral intermediate(s) formed during glutamine hydrolysis. Inhibited by the product CTP, via allosteric rather than competitive inhibition. Catalyzes the ATP-dependent amination of UTP to CTP with either L-glutamine or ammonia as the source of nitrogen. Regulates intracellular CTP levels through interactions with the four ribonucleotide triphosphates. This chain is CTP synthase, found in Geobacter sulfurreducens (strain ATCC 51573 / DSM 12127 / PCA).